The primary structure comprises 101 residues: NAD(P)H-quinone oxidoreductase subunit 4L, chloroplastic (101 aa).

3 helical membrane-spanning segments follow: residues 2–22 (MLEH…YGLI), 32–52 (MCLE…SDFF), and 61–81 (IFSI…LAIV).

It belongs to the complex I subunit 4L family. NDH is composed of at least 16 different subunits, 5 of which are encoded in the nucleus.

The protein resides in the plastid. Its subcellular location is the chloroplast thylakoid membrane. The enzyme catalyses a plastoquinone + NADH + (n+1) H(+)(in) = a plastoquinol + NAD(+) + n H(+)(out). It catalyses the reaction a plastoquinone + NADPH + (n+1) H(+)(in) = a plastoquinol + NADP(+) + n H(+)(out). NDH shuttles electrons from NAD(P)H:plastoquinone, via FMN and iron-sulfur (Fe-S) centers, to quinones in the photosynthetic chain and possibly in a chloroplast respiratory chain. The immediate electron acceptor for the enzyme in this species is believed to be plastoquinone. Couples the redox reaction to proton translocation, and thus conserves the redox energy in a proton gradient. The chain is NAD(P)H-quinone oxidoreductase subunit 4L, chloroplastic from Cicer arietinum (Chickpea).